The chain runs to 538 residues: MTSHHSWYRYSINPFVLMGLVALFLAATANLTFFEKAMAVYPVSDNLGFIISMAVAVMGAMLLIVVLLSYRYVLKPVLILLLIMGAVTSYFTDTYGTVYDTTMLQNAMQTDQAESKDLMNLAFFVRIIGLGVLPSVLVAVAKVNYPTWGKGLIQRAMTWGVSLVLLLVPIGLFSSQYASFFRVHKPVRFYINPITPIYSVGKLASIEYKKATAPTDTIYHAKDAVQTTKPSERKPRLVVFVVGETARADHVQFNGYGRETFPQLAKVDGLANFSQVTSCGTSTAYSVPCMFSYLGQDDYDVDTAKYQENVLDTLDRLGVGILWRDNNSDSKGVMDKLPATQYFDYKSATNNTICNTNPYNECRDVGMLVGLDDYVSANNGKDMLIMLHQMGNHGPAYFKRYDEQFAKFTPVCEGNELAKCEHQSLINAYDNALLATDDFIAKSIDWLKTHEANYDVAMLYVSDHGESLGENGVYLHGMPNAFAPKEQRAVPAFFWSNNTTFKPTASDTVLTHDAITPTLLKLFDVTAGKVKDRAAFIQ.

5 helical membrane passes run 14 to 34 (PFVL…LTFF), 47 to 67 (LGFI…IVVL), 72 to 92 (YVLK…SYFT), 121 to 141 (LAFF…VAVA), and 161 to 181 (VSLV…ASFF). Residues Glu244 and Thr283 each contribute to the Zn(2+) site. 3 disulfide bridges follow: Cys279–Cys289, Cys354–Cys362, and Cys412–Cys420. Position 283 is a phosphothreonine (Thr283). Positions 463 and 464 each coordinate Zn(2+).

This sequence belongs to the phosphoethanolamine transferase family. In terms of assembly, monomer. In terms of processing, phosphorylated at Thr-283; may represent an intermediate in the catalytic mechanism.

The protein resides in the cell inner membrane. It carries out the reaction lipid A (E. coli) + a 1,2-diacyl-sn-glycero-3-phosphoethanolamine + H(+) = lipid A 4'-(2-aminoethyl diphosphate) (E. coli) + a 1,2-diacyl-sn-glycerol. Functionally, probably catalyzes the addition of a phosphoethanolamine moiety to lipid A. Phosphoethanolamine modification of lipid A confers polymyxin resistance. Confers resistance to polymyxin-type antibiotics such as colistin. The chain is Phosphatidylethanolamine transferase Mcr-2 from Escherichia coli.